A 161-amino-acid chain; its full sequence is Transcriptional repressor NrdR (161 aa).

Over residues 1 to 11 the composition is skewed to polar residues; that stretch reads MRCPSCNSLDT. A disordered region spans residues 1–20; sequence MRCPSCNSLDTQVKDSRPTE. Residues 3–34 fold into a zinc finger; the sequence is CPSCNSLDTQVKDSRPTEDSSVIRRRRVCVTC. In terms of domain architecture, ATP-cone spans 49-139; it reads LTVIKRNGRR…VYRNFREAKD (91 aa).

The protein belongs to the NrdR family. It depends on Zn(2+) as a cofactor.

In terms of biological role, negatively regulates transcription of bacterial ribonucleotide reductase nrd genes and operons by binding to NrdR-boxes. This chain is Transcriptional repressor NrdR, found in Bradyrhizobium sp. (strain BTAi1 / ATCC BAA-1182).